Here is a 757-residue protein sequence, read N- to C-terminus: Xylosyl- and glucuronyltransferase LARGE1 (757 aa).

Topologically, residues 1 to 10 (MLGMCRGRRK) are cytoplasmic. The helical; Signal-anchor for type II membrane protein transmembrane segment at 11-31 (FVAASLALIFIPALTWLYLSS) threads the bilayer. Topologically, residues 32–757 (ANITVKPLPL…LKYMTVDNNS (726 aa)) are lumenal. A coiled-coil region spans residues 50 to 82 (AVVGAAAEHQSLELRLRDVEEHNNALRREISRT). Residues 76-127 (RREISRTPRVPTHSSHPSSSRHGNQLHTHSTEEGTGDSEAKKGAAAGNSSDC) are disordered. Residues 82–97 (TPRVPTHSSHPSSSRH) show a composition bias toward low complexity. N123 and N149 each carry an N-linked (GlcNAc...) asparagine glycan. The xylosyltransferase activity stretch occupies residues 139 to 414 (IHIAIVCAGY…FLEYDGNLLR (276 aa)). The Mn(2+) site is built by D243 and D245. An N-linked (GlcNAc...) asparagine glycan is attached at N273. The tract at residues 415–757 (RELFGCPSET…LKYMTVDNNS (343 aa)) is glucuronyltransferase activity. Positions 564 and 566 each coordinate Mn(2+). N738 carries an N-linked (GlcNAc...) asparagine glycan.

The protein in the C-terminal section; belongs to the glycosyltransferase 49 family. In the N-terminal section; belongs to the glycosyltransferase 8 family. Mn(2+) serves as cofactor.

The protein localises to the golgi apparatus membrane. It carries out the reaction 3-O-[beta-D-GlcA-(1-&gt;3)-beta-D-Xyl-(1-&gt;4)-Rib-ol-P-Rib-ol-P-3-beta-D-GalNAc-(1-&gt;3)-beta-D-GlcNAc-(1-&gt;4)-(O-6-P-alpha-D-Man)]-Thr-[protein] + UDP-alpha-D-xylose = 3-O-[alpha-D-Xyl-(1-&gt;3)-beta-D-GlcA-(1-&gt;4)-beta-D-Xyl-(1-&gt;4)-Rib-ol-P-Rib-ol-P-3-beta-D-GalNAc-(1-&gt;3)-beta-D-GlcNAc-(1-&gt;4)-(O-6-P-alpha-D-Man)]-Thr-[protein] + UDP + H(+). The catalysed reaction is 3-O-{(1-&gt;[3)-alpha-D-Xyl-(1-&gt;3)-beta-D-GlcA-(1-&gt;](n)-4)-beta-D-Xyl-(1-&gt;4)-Rib-ol-P-Rib-ol-P-3-beta-D-GalNAc-(1-&gt;3)-beta-D-GlcNAc-(1-&gt;4)-O-6-P-alpha-D-Man}-L-Thr-[protein] + UDP-alpha-D-glucuronate = 3-O-{beta-D-GlcA-(1-&gt;[3)-alpha-D-Xyl-(1-&gt;3)-beta-D-GlcA-(1-&gt;](n)-4)-beta-D-Xyl-(1-&gt;4)-Rib-ol-P-Rib-ol-P-3-beta-D-GalNAc-(1-&gt;3)-beta-D-GlcNAc-(1-&gt;4)-O-6-P-alpha-D-Man}-L-Thr-[protein] + UDP + H(+). It catalyses the reaction 3-O-{beta-D-GlcA-(1-&gt;[3)-alpha-D-Xyl-(1-&gt;3)-beta-D-GlcA-(1-&gt;](n)-4)-beta-D-Xyl-(1-&gt;4)-Rib-ol-P-Rib-ol-P-3-beta-D-GalNAc-(1-&gt;3)-beta-D-GlcNAc-(1-&gt;4)-O-6-P-alpha-D-Man}-L-Thr-[protein] + UDP-alpha-D-xylose = 3-O-{(1-&gt;[3)-alpha-D-Xyl-(1-&gt;3)-beta-D-GlcA-(1-&gt;](n+1)-4)-beta-D-Xyl-(1-&gt;4)-Rib-ol-P-Rib-ol-P-3-beta-D-GalNAc-(1-&gt;3)-beta-D-GlcNAc-(1-&gt;4)-O-6-P-alpha-D-Man}-L-Thr-[protein] + UDP + H(+). Its pathway is protein modification; protein glycosylation. Functionally, bifunctional glycosyltransferase with both alpha-1,3-xylosyltransferase and beta-1,3-glucuronyltransferase activities involved in the maturation of alpha-dystroglycan (DAG1) by glycosylation leading to DAG1 binding to laminin G-like domain-containing extracellular proteins with high affinity. Elongates the glucuronyl-beta-1,4-xylose-beta disaccharide primer structure initiated by B4GAT1 by adding repeating units [-3-Xylose-alpha-1,3-GlcA-beta-1-] to produce a heteropolysaccharide. Requires the phosphorylation of core M3 (O-mannosyl trisaccharide) by POMK to elongate the glucuronyl-beta-1,4-xylose-beta disaccharide primer. Plays a key role in skeletal muscle function and regeneration. In Danio rerio (Zebrafish), this protein is Xylosyl- and glucuronyltransferase LARGE1.